A 187-amino-acid polypeptide reads, in one-letter code: Flavin prenyltransferase UbiX (187 aa).

FMN-binding positions include 9 to 11 (GAS), serine 34, and arginine 123. Tyrosine 153 and lysine 169 together coordinate dimethylallyl phosphate.

Belongs to the UbiX/PAD1 family.

The enzyme catalyses dimethylallyl phosphate + FMNH2 = prenylated FMNH2 + phosphate. Functionally, flavin prenyltransferase that catalyzes the synthesis of the prenylated FMN cofactor (prenyl-FMN) for 4-hydroxy-3-polyprenylbenzoic acid decarboxylase UbiD. The prenyltransferase is metal-independent and links a dimethylallyl moiety from dimethylallyl monophosphate (DMAP) to the flavin N5 and C6 atoms of FMN. This chain is Flavin prenyltransferase UbiX, found in Helicobacter pylori (strain J99 / ATCC 700824) (Campylobacter pylori J99).